The sequence spans 208 residues: 3-demethoxyubiquinol 3-hydroxylase (208 aa).

Fe cation is bound by residues E57, E87, H90, E139, E171, and H174.

Belongs to the COQ7 family. Fe cation is required as a cofactor.

Its subcellular location is the cell membrane. It carries out the reaction a 5-methoxy-2-methyl-3-(all-trans-polyprenyl)benzene-1,4-diol + AH2 + O2 = a 3-demethylubiquinol + A + H2O. The protein operates within cofactor biosynthesis; ubiquinone biosynthesis. In terms of biological role, catalyzes the hydroxylation of 2-nonaprenyl-3-methyl-6-methoxy-1,4-benzoquinol during ubiquinone biosynthesis. The protein is 3-demethoxyubiquinol 3-hydroxylase of Burkholderia ambifaria (strain ATCC BAA-244 / DSM 16087 / CCUG 44356 / LMG 19182 / AMMD) (Burkholderia cepacia (strain AMMD)).